We begin with the raw amino-acid sequence, 115 residues long: Nascent polypeptide-associated complex protein (115 aa).

One can recognise an NAC-A/B domain in the interval 6–72 (PMNPKQLKKL…SEEEKAIINI (67 aa)).

Belongs to the NAC-alpha family. As to quaternary structure, homodimer. Interacts with the ribosome. Binds ribosomal RNA.

Contacts the emerging nascent chain on the ribosome. In Pyrococcus horikoshii (strain ATCC 700860 / DSM 12428 / JCM 9974 / NBRC 100139 / OT-3), this protein is Nascent polypeptide-associated complex protein.